The chain runs to 406 residues: 3-oxoacyl-[acyl-carrier-protein] synthase 1 (406 aa).

In terms of domain architecture, Ketosynthase family 3 (KS3) spans 1–405 (MRRVVITGIG…GTNVSLIVKK (405 aa)). Catalysis depends on for beta-ketoacyl synthase activity residues cysteine 164, histidine 299, and histidine 335.

Belongs to the thiolase-like superfamily. Beta-ketoacyl-ACP synthases family. As to quaternary structure, homodimer.

It localises to the cytoplasm. The catalysed reaction is a fatty acyl-[ACP] + malonyl-[ACP] + H(+) = a 3-oxoacyl-[ACP] + holo-[ACP] + CO2. It carries out the reaction (3Z)-decenoyl-[ACP] + malonyl-[ACP] + H(+) = 3-oxo-(5Z)-dodecenoyl-[ACP] + holo-[ACP] + CO2. It participates in lipid metabolism; fatty acid biosynthesis. Its function is as follows. Involved in the type II fatty acid elongation cycle. Catalyzes the elongation of a wide range of acyl-ACP by the addition of two carbons from malonyl-ACP to an acyl acceptor. Can also use unsaturated fatty acids. Catalyzes a key reaction in unsaturated fatty acid (UFA) synthesis, the elongation of the cis-3-decenoyl-ACP produced by FabA. This is 3-oxoacyl-[acyl-carrier-protein] synthase 1 (fabB) from Buchnera aphidicola subsp. Acyrthosiphon pisum (strain APS) (Acyrthosiphon pisum symbiotic bacterium).